Here is a 258-residue protein sequence, read N- to C-terminus: uncharacterized protein (258 aa).

N-linked (GlcNAc...) asparagine; by host glycans are attached at residues asparagine 60, asparagine 104, and asparagine 113. A compositionally biased stretch (low complexity) spans 147 to 156 (TTRKPGQKTT). The interval 147-183 (TTRKPGQKTTLSRLKTTPNKHTQHKRSTRRTSPRDYN) is disordered. The segment covering 157-166 (LSRLKTTPNK) has biased composition (polar residues). A compositionally biased stretch (basic residues) spans 167–177 (HTQHKRSTRRT). Asparagine 183 carries an N-linked (GlcNAc...) asparagine; by host glycan. Residues 208-228 (AHSAWILIVIIIIIVVILFFF) form a helical membrane-spanning segment.

Belongs to the RL11 family.

The protein resides in the membrane. This is an uncharacterized protein from Human cytomegalovirus (strain AD169) (HHV-5).